Here is a 103-residue protein sequence, read N- to C-terminus: Small ribosomal subunit protein uS10 (103 aa).

It belongs to the universal ribosomal protein uS10 family. In terms of assembly, part of the 30S ribosomal subunit.

Its function is as follows. Involved in the binding of tRNA to the ribosomes. This Pectobacterium atrosepticum (strain SCRI 1043 / ATCC BAA-672) (Erwinia carotovora subsp. atroseptica) protein is Small ribosomal subunit protein uS10.